The chain runs to 355 residues: Anthranilate phosphoribosyltransferase (355 aa).

5-phospho-alpha-D-ribose 1-diphosphate contacts are provided by residues glycine 91, 94–95 (GD), threonine 99, 101–104 (NIST), 119–127 (KHGNRAMSS), and alanine 131. Glycine 91 lines the anthranilate pocket. Serine 103 is a Mg(2+) binding site. Asparagine 122 lines the anthranilate pocket. Residue arginine 177 participates in anthranilate binding. Mg(2+) is bound by residues aspartate 234 and glutamate 235.

This sequence belongs to the anthranilate phosphoribosyltransferase family. As to quaternary structure, homodimer. It depends on Mg(2+) as a cofactor.

It catalyses the reaction N-(5-phospho-beta-D-ribosyl)anthranilate + diphosphate = 5-phospho-alpha-D-ribose 1-diphosphate + anthranilate. The protein operates within amino-acid biosynthesis; L-tryptophan biosynthesis; L-tryptophan from chorismate: step 2/5. In terms of biological role, participates in the tryptophan-dependent indole-3-acetic acid production, which is a phytohormone released by A.brasilense. Its function is as follows. Catalyzes the transfer of the phosphoribosyl group of 5-phosphorylribose-1-pyrophosphate (PRPP) to anthranilate to yield N-(5'-phosphoribosyl)-anthranilate (PRA). The polypeptide is Anthranilate phosphoribosyltransferase (Azospirillum brasilense).